The sequence spans 308 residues: ATP synthase gamma chain (308 aa).

This sequence belongs to the ATPase gamma chain family. In terms of assembly, F-type ATPases have 2 components, CF(1) - the catalytic core - and CF(0) - the membrane proton channel. CF(1) has five subunits: alpha(3), beta(3), gamma(1), delta(1), epsilon(1). CF(0) has three main subunits: a, b and c.

It is found in the cell inner membrane. Its function is as follows. Produces ATP from ADP in the presence of a proton gradient across the membrane. The gamma chain is believed to be important in regulating ATPase activity and the flow of protons through the CF(0) complex. This is ATP synthase gamma chain from Bartonella tribocorum (strain CIP 105476 / IBS 506).